Reading from the N-terminus, the 1443-residue chain is MEEELAIEDLPRLTGTVSLNNGLLHSIYNETTVFKILRWSLVEIPKYILKLMSKNLEINLNVSSILIITLLIAAGILVIVRYKFLTGYSEDIKKGGSNANTKALGQQSTNYPKSTSSGLFVEKSKDKKPSNYLDEFLMAIKVFGYLDKQVFHELTKSMTTQKLSRDEVMCLDEKIGFLIVVEGTAQVYTKVTKKSNRNKYDELGQNGRDEGEEADEDDEEEEKEVGDDGDDEMDVEAMRNRGNGTKNGKMHGLDTDNFEENDDFLKLGEQNYQLLNEVKSGAALSSLISTLDLFKPLKSESTLTPLDSMGSGVSLNLDYLDRAGARLKALENDSDADTRDSTYPDIIVRPKKKKHSDTITVAIIPQSAFERVQMKYPKSTSHIVTMVLTRLYKVTMTTIHNYLGLTGEIFKLEIELNKSCELGLPRYLVDGLIERLSQGGSNERKQQAKHFRRSPLERTQSRYVLLNSRVKSNNPGDLLSSVPISRDDPKLRVNKSSAPTLVDGSNRINFTDNIEETEENSLRIAIIENIFKIVGINEAQNLPHEQAPFRSLNSSANSSSIALNSPGYFSPNLPATTGRHHNVLKFSSNDSLMNTISLSQLKSQKTHSISRGSTTQKQLYKRRNPITEMNIKDAFAKVMELKYIEPNTTVVQQNSVFCGLYYVINGSLEVHYKQAETYSKSATSKHVYTVGAGGIAGYMSCVVGFRSLVSIKTPKKTGAVVAYIAKNDYNQLLDKFYFLQLPMATKLKSLLSKQVMTIDYALEWCHIPAGNVLCSQGDLANGFHVVLSGRFRVVRKEKRKGSNRDEVKVLGEYGHGESIGEVEVLTASRRSNSLIAVRDSETARIPRTLFEILSFQNPSIMVKVSRLVASKVLSSEKTLSQATHSFITSSSNESFISADYKTITILPTVSGLPVRDFADKLVHSLKAIGRNVIALDQALTLTHLGRHAFDESLVRLKLSGYFAYLEEEYETVVYICDTPVQSNWTSTCISQGDCVLLLADADDQYTASSVGEYEQLLIKMKTTARTDLCLIHQEKFVVSGSTSRWLKNRMWVQGHHHIQMYIERNNETIGPGKKSFINEMAAKFVQNKSLISKFEEARSKALSWRREEQLKDLTLGSHKSDFLRLARILSNEAVGLVLGGGGSRGISHVGVVTALERHGIPVDLIGGTSIGSFVGGLYAKDYNIVSIYGRAKKFSKRVSSVWRMIFDLTYPVTSYITGYEFNRGIWKVFGFTEIEDFWIKYFCNSTNITNSTMDIHESGYAWRFIRASMSLAGLLPPIAFKGCMLLDGGYLDNLPVMEMKRRGAKHIFAVDVGSVDDRTPMDYGDTLSGFWVVFNKWNPFSKHPNVPNMMDIQLRLAYVASVNALEEAKRTPGVYYLRPPIDNYATLDFGKFDEIYQVGLGYADKLFTEWENKKQLPEIAGFVKRDGMQNGGERIKMYRRNTM.

Residues 1–59 (MEEELAIEDLPRLTGTVSLNNGLLHSIYNETTVFKILRWSLVEIPKYILKLMSKNLEIN) lie on the Lumenal side of the membrane. A helical membrane pass occupies residues 60 to 80 (LNVSSILIITLLIAAGILVIV). Residues 81–1443 (RYKFLTGYSE…RIKMYRRNTM (1363 aa)) are Cytoplasmic-facing. The segment covering 103–118 (ALGQQSTNYPKSTSSG) has biased composition (polar residues). Disordered stretches follow at residues 103–122 (ALGQ…LFVE) and 199–251 (KYDE…GKMH). Over residues 210–235 (EGEEADEDDEEEEKEVGDDGDDEMDV) the composition is skewed to acidic residues. Residues 619-750 (LYKR…LKSL) and 746-871 (KLKS…VASK) each bind a nucleoside 3',5'-cyclic phosphate. Residues 1136–1300 (LVLGGGGSRG…LDNLPVMEMK (165 aa)) form the PNPLA domain. The GXGXXG motif lies at 1140–1145 (GGGSRG). Positions 1167 to 1171 (GTSIG) match the GXSXG motif. S1169 acts as the Nucleophile in catalysis. D1287 acts as the Proton acceptor in catalysis. The short motif at 1287–1289 (DGG) is the DGA/G element.

Belongs to the NTE family.

The protein localises to the endoplasmic reticulum membrane. The enzyme catalyses a 1-acyl-sn-glycero-3-phosphocholine + H2O = sn-glycerol 3-phosphocholine + a fatty acid + H(+). With respect to regulation, inhibited by organophosphorus esters. Functionally, intracellular phospholipase B that catalyzes the double deacylation of phosphatidylcholine (PC) to glycerophosphocholine (GroPCho). Plays an important role in membrane lipid homeostasis. Responsible for the rapid PC turnover in response to inositol, elevated temperatures, or when choline is present in the growth medium. The sequence is that of Lysophospholipase NTE1 (NTE1) from Lodderomyces elongisporus (strain ATCC 11503 / CBS 2605 / JCM 1781 / NBRC 1676 / NRRL YB-4239) (Yeast).